A 458-amino-acid polypeptide reads, in one-letter code: Argininosuccinate lyase (458 aa).

This sequence belongs to the lyase 1 family. Argininosuccinate lyase subfamily.

Its subcellular location is the cytoplasm. The enzyme catalyses 2-(N(omega)-L-arginino)succinate = fumarate + L-arginine. Its pathway is amino-acid biosynthesis; L-arginine biosynthesis; L-arginine from L-ornithine and carbamoyl phosphate: step 3/3. This chain is Argininosuccinate lyase, found in Neisseria meningitidis serogroup C / serotype 2a (strain ATCC 700532 / DSM 15464 / FAM18).